We begin with the raw amino-acid sequence, 229 residues long: DNA mismatch repair protein MutH (229 aa).

The protein belongs to the MutH family.

Its subcellular location is the cytoplasm. Functionally, sequence-specific endonuclease that cleaves unmethylated GATC sequences. It is involved in DNA mismatch repair. In Escherichia coli (strain SMS-3-5 / SECEC), this protein is DNA mismatch repair protein MutH.